Consider the following 199-residue polypeptide: Nucleoid occlusion factor SlmA (199 aa).

The region spanning 11–71 (ERRQQVLTVL…ALIDNLEAHL (61 aa)) is the HTH tetR-type domain. Positions 34-53 (TTARIAAEVGVSEAALYRYY) form a DNA-binding region, H-T-H motif.

The protein belongs to the nucleoid occlusion factor SlmA family. Homodimer. Interacts with FtsZ.

Its subcellular location is the cytoplasm. It is found in the nucleoid. Its function is as follows. Required for nucleoid occlusion (NO) phenomenon, which prevents Z-ring formation and cell division over the nucleoid. Acts as a DNA-associated cell division inhibitor that binds simultaneously chromosomal DNA and FtsZ, and disrupts the assembly of FtsZ polymers. SlmA-DNA-binding sequences (SBS) are dispersed on non-Ter regions of the chromosome, preventing FtsZ polymerization at these regions. The protein is Nucleoid occlusion factor SlmA of Pasteurella multocida (strain Pm70).